Consider the following 261-residue polypeptide: Cytochrome c oxidase subunit 3 (261 aa).

The Mitochondrial matrix portion of the chain corresponds to 1 to 15 (MTHQTHAYHMVNPSP). A helical transmembrane segment spans residues 16–34 (WPLTGALSALLMTSGLTMW). At 35–40 (FHFNSM) the chain is on the mitochondrial intermembrane side. A helical membrane pass occupies residues 41-66 (TLLMIGLTTNMLTMYQWWRDVIREST). The Mitochondrial matrix portion of the chain corresponds to 67-72 (FQGHHT). Residues 73–105 (PAVQKGLRYGMILFIISEVLFFTGFFWAFYHSS) form a helical membrane-spanning segment. Over 106–128 (LAPTPELGGCWPPTGIHPLNPLE) the chain is Mitochondrial intermembrane. Residues 129–152 (VPLLNTSVLLASGVSITWAHHSLM) traverse the membrane as a helical segment. The Mitochondrial matrix portion of the chain corresponds to 153 to 155 (EGD). Residues 156–183 (RKHMLQALFITITLGVYFTLLQASEYYE) traverse the membrane as a helical segment. The Mitochondrial intermembrane portion of the chain corresponds to 184-190 (APFTISD). Residues 191-223 (GVYGSTFFVATGFHGLHVIIGSTFLIVCFFRQL) traverse the membrane as a helical segment. At 224-232 (KFHFTSNHH) the chain is on the mitochondrial matrix side. A helical membrane pass occupies residues 233–256 (FGFEAAAWYWHFVDVVWLFLYVSI). The Mitochondrial intermembrane segment spans residues 257–261 (YWWGS).

The protein belongs to the cytochrome c oxidase subunit 3 family. In terms of assembly, component of the cytochrome c oxidase (complex IV, CIV), a multisubunit enzyme composed of 14 subunits. The complex is composed of a catalytic core of 3 subunits MT-CO1, MT-CO2 and MT-CO3, encoded in the mitochondrial DNA, and 11 supernumerary subunits COX4I1 (or COX4I2), COX5A, COX5B, COX6A2 (or COX6A1), COX6B1 (or COX6B2), COX6C, COX7A1 (or COX7A2), COX7B, COX7C, COX8B and NDUFA4, which are encoded in the nuclear genome. The complex exists as a monomer or a dimer and forms supercomplexes (SCs) in the inner mitochondrial membrane with NADH-ubiquinone oxidoreductase (complex I, CI) and ubiquinol-cytochrome c oxidoreductase (cytochrome b-c1 complex, complex III, CIII), resulting in different assemblies (supercomplex SCI(1)III(2)IV(1) and megacomplex MCI(2)III(2)IV(2)).

It is found in the mitochondrion inner membrane. It catalyses the reaction 4 Fe(II)-[cytochrome c] + O2 + 8 H(+)(in) = 4 Fe(III)-[cytochrome c] + 2 H2O + 4 H(+)(out). Functionally, component of the cytochrome c oxidase, the last enzyme in the mitochondrial electron transport chain which drives oxidative phosphorylation. The respiratory chain contains 3 multisubunit complexes succinate dehydrogenase (complex II, CII), ubiquinol-cytochrome c oxidoreductase (cytochrome b-c1 complex, complex III, CIII) and cytochrome c oxidase (complex IV, CIV), that cooperate to transfer electrons derived from NADH and succinate to molecular oxygen, creating an electrochemical gradient over the inner membrane that drives transmembrane transport and the ATP synthase. Cytochrome c oxidase is the component of the respiratory chain that catalyzes the reduction of oxygen to water. Electrons originating from reduced cytochrome c in the intermembrane space (IMS) are transferred via the dinuclear copper A center (CU(A)) of subunit 2 and heme A of subunit 1 to the active site in subunit 1, a binuclear center (BNC) formed by heme A3 and copper B (CU(B)). The BNC reduces molecular oxygen to 2 water molecules using 4 electrons from cytochrome c in the IMS and 4 protons from the mitochondrial matrix. This chain is Cytochrome c oxidase subunit 3 (MT-CO3), found in Bos taurus (Bovine).